A 326-amino-acid chain; its full sequence is Probable cell division protein WhiA (326 aa).

The H-T-H motif DNA-binding region spans 275 to 308 (SLDELGRLADPPMTKDAIAGRIRRLLAMADKRAL).

This sequence belongs to the WhiA family.

Involved in cell division and chromosome segregation. The chain is Probable cell division protein WhiA from Arthrobacter sp. (strain FB24).